A 350-amino-acid polypeptide reads, in one-letter code: Salicylate decarboxylase (350 aa).

This sequence belongs to the metallo-dependent hydrolases superfamily. As to quaternary structure, homotetramer.

It carries out the reaction salicylate + H(+) = phenol + CO2. Its activity is regulated as follows. Inhibited by AgNO(3), HgCl(2), p-chloromercuribenzoic acid and NiCl(2). Reversibly catalyzes the regioselective carboxylation of phenol to form salicylic acid. Involved in a pathway for the degradation of salicylate via phenol. Also catalyzes the decarboxylation of beta-resorcylic acid (2,4-dihydroxybenzoic acid) into resorcinol (1,3-dihydroxybenzene), gamma-resorcylic acid (2,6-dihydroxybenzoic acid) into resorcinol, 2,3-dihydroxybenzoic acid into catechol (1,2-dihydroxybenzene), and 4-aminosalicylic acid into 3-aminophenol. This is Salicylate decarboxylase from Cutaneotrichosporon moniliiforme (Yeast).